The chain runs to 677 residues: Fermitin family homolog 1 (677 aa).

One can recognise an FERM domain in the interval Met-96–Leu-653. The segment at Lys-157–Gly-181 is disordered. Residues Ser-169 to Gly-181 show a composition bias toward low complexity. 2 positions are modified to phosphoserine: Ser-170 and Ser-179. The region spanning Lys-377 to Lys-473 is the PH domain.

This sequence belongs to the kindlin family. Interacts with the cytoplasmic domain of integrins ITGB1 and ITGB3.

It localises to the cytoplasm. It is found in the cytoskeleton. Its subcellular location is the cell junction. The protein resides in the focal adhesion. The protein localises to the cell projection. It localises to the ruffle membrane. Involved in cell adhesion. Contributes to integrin activation. When coexpressed with talin, potentiates activation of ITGA2B. Required for normal keratinocyte proliferation. Required for normal polarization of basal keratinocytes in skin, and for normal cell shape. Required for normal adhesion of keratinocytes to fibronectin and laminin, and for normal keratinocyte migration to wound sites. This is Fermitin family homolog 1 (Fermt1) from Mus musculus (Mouse).